The following is a 313-amino-acid chain: Putative S-adenosyl-L-methionine-dependent methyltransferase MAV_5149 (313 aa).

S-adenosyl-L-methionine is bound by residues Asp-135 and 164–165 (DL).

It belongs to the UPF0677 family.

Functionally, exhibits S-adenosyl-L-methionine-dependent methyltransferase activity. This chain is Putative S-adenosyl-L-methionine-dependent methyltransferase MAV_5149, found in Mycobacterium avium (strain 104).